A 186-amino-acid chain; its full sequence is Elongation factor P (186 aa).

It belongs to the elongation factor P family.

It localises to the cytoplasm. It functions in the pathway protein biosynthesis; polypeptide chain elongation. Involved in peptide bond synthesis. Stimulates efficient translation and peptide-bond synthesis on native or reconstituted 70S ribosomes in vitro. Probably functions indirectly by altering the affinity of the ribosome for aminoacyl-tRNA, thus increasing their reactivity as acceptors for peptidyl transferase. The polypeptide is Elongation factor P (Synechococcus sp. (strain CC9902)).